The following is a 312-amino-acid chain: Protein phosphatase PTC7 homolog fig (312 aa).

The PPM-type phosphatase domain occupies 42 to 306 (IQGSSKDQLA…DDITVILASV (265 aa)). Positions 83, 84, and 228 each coordinate Mn(2+).

Belongs to the PP2C family. Mg(2+) serves as cofactor. The cofactor is Mn(2+).

The catalysed reaction is O-phospho-L-seryl-[protein] + H2O = L-seryl-[protein] + phosphate. It carries out the reaction O-phospho-L-threonyl-[protein] + H2O = L-threonyl-[protein] + phosphate. This Drosophila mojavensis (Fruit fly) protein is Protein phosphatase PTC7 homolog fig.